The following is a 308-amino-acid chain: MSGGLDVLQMKEEDVLKFLAAGTHLGGTNLDFQMEQYVYKRKSDGVYIINLKKTWEKLLLAARAIVAIENPADVCVISSRNTGQRAVLKFASATGSTTFAGRFTPGTFTNQIQAAFREPRLLIVTDPRADHQPLTEASYVNIPTIALCNTDSPLRYVDIAIPCNNKGPHSVGLMWWMLAREVLRMRGTISREHPWEVMPDLYFYRDPEEIEKEEQAAAEKAVGKEEFQGEWTAPVPDFNQPEVADWSEGVQVPSVPIQQFPAGIEAPGKPAPAEVYAEDWSAQPATEDWSAAPTAQAGDWGGATADWS.

The residue at position 2 (serine 2) is an N-acetylserine. 2 laminin-binding regions span residues 161 to 180 (IPCN…MLAR) and 205 to 229 (RDPE…EFQG). [DE]-W-[ST] repeat units follow at residues 230–232 (EWT), 245–247 (DWS), 279–281 (DWS), 288–290 (DWS), and 306–308 (DWS). The interval 242–308 (EVADWSEGVQ…DWGGATADWS (67 aa)) is laminin-binding. Residues 262–308 (AGIEAPGKPAPAEVYAEDWSAQPATEDWSAAPTAQAGDWGGATADWS) are disordered.

The protein belongs to the universal ribosomal protein uS2 family. In terms of assembly, monomer (37LRP) and homodimer (67LR). Component of the small ribosomal subunit. Mature ribosomes consist of a small (40S) and a large (60S) subunit. The 40S subunit contains about 33 different proteins and 1 molecule of RNA (18S). The 60S subunit contains about 49 different proteins and 3 molecules of RNA (28S, 5.8S and 5S). Interacts with rps21. Interacts with several laminins including at least lamb1. Interacts with mdk. Post-translationally, acylated. Acylation may be a prerequisite for conversion of the monomeric 37 kDa laminin receptor precursor (37LRP) to the mature dimeric 67 kDa laminin receptor (67LR), and may provide a mechanism for membrane association. Cleaved by stromelysin-3 (ST3) at the cell surface. Cleavage by stromelysin-3 may be a mechanism to alter cell-extracellular matrix interactions.

It localises to the cell membrane. The protein localises to the cytoplasm. The protein resides in the nucleus. Its function is as follows. Required for the assembly and/or stability of the 40S ribosomal subunit. Required for the processing of the 20S rRNA-precursor to mature 18S rRNA in a late step of the maturation of 40S ribosomal subunits. Also functions as a cell surface receptor for laminin. Plays a role in cell adhesion to the basement membrane and in the consequent activation of signaling transduction pathways. May play a role in cell fate determination and tissue morphogenesis. This Danio rerio (Zebrafish) protein is Small ribosomal subunit protein uS2 (rpsa).